Consider the following 1121-residue polypeptide: Peroxisomal ATPase PEX1 (1121 aa).

Disordered regions lie at residues 187–221 (SISS…NNGE) and 1099–1121 (SGRD…STLM). A compositionally biased stretch (low complexity) spans 205-217 (SSTSTATGRRSVT).

This sequence belongs to the AAA ATPase family. As to quaternary structure, interacts with PEX6; forming the PEX1-PEX6 AAA ATPase complex, which is composed of a heterohexamer formed by a trimer of PEX1-PEX6 dimers.

Its subcellular location is the membrane. The catalysed reaction is ATP + H2O = ADP + phosphate + H(+). Functionally, component of the PEX1-PEX6 AAA ATPase complex involved in peroxisome biosynthesis. The complex acts as a protein dislocase complex that mediates the ATP-dependent extraction of the PEX5 receptor from peroxisomal membranes, an essential step for PEX5 recycling. Specifically recognizes PEX5 monoubiquitinated at 'Cys-6', and pulls it out of the peroxisome lumen through the PEX2-PEX10-PEX12 retrotranslocation channel. Extraction by the PEX1-PEX6 AAA ATPase complex is accompanied by unfolding of the TPR repeats and release of bound cargo from PEX5. This chain is Peroxisomal ATPase PEX1, found in Komagataella phaffii (strain GS115 / ATCC 20864) (Yeast).